The following is a 241-amino-acid chain: 1-(5-phosphoribosyl)-5-[(5-phosphoribosylamino)methylideneamino] imidazole-4-carboxamide isomerase (241 aa).

D8 acts as the Proton acceptor in catalysis. D131 serves as the catalytic Proton donor.

The protein belongs to the HisA/HisF family.

The protein localises to the cytoplasm. It carries out the reaction 1-(5-phospho-beta-D-ribosyl)-5-[(5-phospho-beta-D-ribosylamino)methylideneamino]imidazole-4-carboxamide = 5-[(5-phospho-1-deoxy-D-ribulos-1-ylimino)methylamino]-1-(5-phospho-beta-D-ribosyl)imidazole-4-carboxamide. The protein operates within amino-acid biosynthesis; L-histidine biosynthesis; L-histidine from 5-phospho-alpha-D-ribose 1-diphosphate: step 4/9. The polypeptide is 1-(5-phosphoribosyl)-5-[(5-phosphoribosylamino)methylideneamino] imidazole-4-carboxamide isomerase (Sorangium cellulosum (strain So ce56) (Polyangium cellulosum (strain So ce56))).